Reading from the N-terminus, the 201-residue chain is Probable GTP-binding protein EngB (201 aa).

The EngB-type G domain occupies Ser-22–Tyr-195. Residues Gly-30–Ser-37, Gly-57–Thr-61, Asp-75–Gly-78, Thr-142–Asp-145, and Tyr-174–Ser-176 each bind GTP. Residues Ser-37 and Thr-59 each coordinate Mg(2+).

It belongs to the TRAFAC class TrmE-Era-EngA-EngB-Septin-like GTPase superfamily. EngB GTPase family. Mg(2+) is required as a cofactor.

In terms of biological role, necessary for normal cell division and for the maintenance of normal septation. The protein is Probable GTP-binding protein EngB of Finegoldia magna (strain ATCC 29328 / DSM 20472 / WAL 2508) (Peptostreptococcus magnus).